Consider the following 378-residue polypeptide: UDP-N-acetylglucosamine--N-acetylmuramyl-(pentapeptide) pyrophosphoryl-undecaprenol N-acetylglucosamine transferase (378 aa).

UDP-N-acetyl-alpha-D-glucosamine is bound by residues 14-16 (TGG), N125, R165, S193, and Q293.

It belongs to the glycosyltransferase 28 family. MurG subfamily.

It localises to the cell inner membrane. The catalysed reaction is di-trans,octa-cis-undecaprenyl diphospho-N-acetyl-alpha-D-muramoyl-L-alanyl-D-glutamyl-meso-2,6-diaminopimeloyl-D-alanyl-D-alanine + UDP-N-acetyl-alpha-D-glucosamine = di-trans,octa-cis-undecaprenyl diphospho-[N-acetyl-alpha-D-glucosaminyl-(1-&gt;4)]-N-acetyl-alpha-D-muramoyl-L-alanyl-D-glutamyl-meso-2,6-diaminopimeloyl-D-alanyl-D-alanine + UDP + H(+). It participates in cell wall biogenesis; peptidoglycan biosynthesis. Functionally, cell wall formation. Catalyzes the transfer of a GlcNAc subunit on undecaprenyl-pyrophosphoryl-MurNAc-pentapeptide (lipid intermediate I) to form undecaprenyl-pyrophosphoryl-MurNAc-(pentapeptide)GlcNAc (lipid intermediate II). This chain is UDP-N-acetylglucosamine--N-acetylmuramyl-(pentapeptide) pyrophosphoryl-undecaprenol N-acetylglucosamine transferase, found in Bartonella henselae (strain ATCC 49882 / DSM 28221 / CCUG 30454 / Houston 1) (Rochalimaea henselae).